Consider the following 165-residue polypeptide: PTS system glucose-specific EIIA component (165 aa).

One can recognise a PTS EIIA type-1 domain in the interval 34–138 (DPVFAQKMMG…SSITPIIISN (105 aa)). H71 and H86 together coordinate Zn(2+). The active-site Tele-phosphohistidine intermediate; for EIIA activity is H86. H86 is modified (phosphohistidine; by HPr).

As to quaternary structure, heterodimer with glycerol kinase (glpk). It depends on Zn(2+) as a cofactor.

It is found in the cytoplasm. In terms of biological role, the phosphoenolpyruvate-dependent sugar phosphotransferase system (sugar PTS), a major carbohydrate active transport system, catalyzes the phosphorylation of incoming sugar substrates concomitantly with their translocation across the cell membrane. The enzyme II complex composed of PtsG and Crr is involved in glucose transport. This chain is PTS system glucose-specific EIIA component (crr), found in Oceanobacillus iheyensis (strain DSM 14371 / CIP 107618 / JCM 11309 / KCTC 3954 / HTE831).